Consider the following 316-residue polypeptide: Leucine-rich repeat-containing protein 73 (316 aa).

7 LRR repeats span residues 57–78, 86–106, 114–137, 145–166, 174–187, 202–223, and 231–250; these read SLAQ…KQLA, SIQS…ALLN, ALVA…CGLL, GLKE…SRLA, QVRV…PLGD, TLEV…TLLD, and ALRS…QQQI. The segment at 257–296 is disordered; the sequence is GEEEEEMAGGAADTQEWGRGREPAAHQRGGSSWKCPSDPN. Over residues 272 to 281 the composition is skewed to basic and acidic residues; it reads EWGRGREPAA.

The protein is Leucine-rich repeat-containing protein 73 (Lrrc73) of Rattus norvegicus (Rat).